The chain runs to 208 residues: NAD(P)H-quinone oxidoreductase subunit M, chloroplastic (208 aa).

Residues M1–G21 constitute a chloroplast transit peptide. A compositionally biased stretch (low complexity) spans Q37–A49. The segment at Q37–E70 is disordered.

Belongs to the NDH complex subunit M family. As to quaternary structure, part of the chloroplast NDH complex, composed of a mixture of chloroplast and nucleus encoded subunits. Component of the NDH subcomplex A, at least composed of ndhH, ndhI, ndhJ, ndhK, ndhL, ndhM, ndhN and ndhO.

It localises to the plastid. Its subcellular location is the chloroplast thylakoid membrane. The catalysed reaction is a plastoquinone + NADH + (n+1) H(+)(in) = a plastoquinol + NAD(+) + n H(+)(out). It catalyses the reaction a plastoquinone + NADPH + (n+1) H(+)(in) = a plastoquinol + NADP(+) + n H(+)(out). NDH shuttles electrons from NAD(P)H:plastoquinone, via FMN and iron-sulfur (Fe-S) centers, to quinones in the photosynthetic chain and possibly in a chloroplast respiratory chain. The immediate electron acceptor for the enzyme in this species is believed to be plastoquinone. Couples the redox reaction to proton translocation, and thus conserves the redox energy in a proton gradient. This chain is NAD(P)H-quinone oxidoreductase subunit M, chloroplastic, found in Vitis vinifera (Grape).